Consider the following 212-residue polypeptide: Orotate phosphoribosyltransferase (212 aa).

Lys-26 contributes to the 5-phospho-alpha-D-ribose 1-diphosphate binding site. An orotate-binding site is contributed by 34–35 (FF). 5-phospho-alpha-D-ribose 1-diphosphate-binding positions include 72–73 (YK), Arg-98, Lys-99, Lys-102, His-104, and 123–131 (DDVITAGTA). Orotate-binding residues include Thr-127 and Arg-155.

The protein belongs to the purine/pyrimidine phosphoribosyltransferase family. PyrE subfamily. Homodimer. Mg(2+) serves as cofactor.

The enzyme catalyses orotidine 5'-phosphate + diphosphate = orotate + 5-phospho-alpha-D-ribose 1-diphosphate. Its pathway is pyrimidine metabolism; UMP biosynthesis via de novo pathway; UMP from orotate: step 1/2. Functionally, catalyzes the transfer of a ribosyl phosphate group from 5-phosphoribose 1-diphosphate to orotate, leading to the formation of orotidine monophosphate (OMP). This Marinobacter nauticus (strain ATCC 700491 / DSM 11845 / VT8) (Marinobacter aquaeolei) protein is Orotate phosphoribosyltransferase.